A 69-amino-acid chain; its full sequence is Conotoxin Lp3.1 (69 aa).

An N-terminal signal peptide occupies residues 1 to 20 (MLKMGVLLFIFLVLFPLTTL). A propeptide spanning residues 21–54 (ELDTDRPVERHAAIKQDLKPQERRGIRLHAPRDE) is cleaved from the precursor. Cystine bridges form between cysteine 55–cysteine 67, cysteine 56–cysteine 65, and cysteine 61–cysteine 68.

The protein belongs to the conotoxin M superfamily. In terms of tissue distribution, expressed by the venom duct.

It is found in the secreted. The protein is Conotoxin Lp3.1 of Conus leopardus (Leopard cone).